Reading from the N-terminus, the 494-residue chain is Protein nucleotidyltransferase YdiU (494 aa).

Residues Gly-99, Gly-101, Arg-102, Lys-118, Asp-130, Gly-131, Arg-181, and Arg-188 each contribute to the ATP site. Asp-261 serves as the catalytic Proton acceptor. Residues Asn-262 and Asp-271 each contribute to the Mg(2+) site. An ATP-binding site is contributed by Asp-271.

It belongs to the SELO family. It depends on Mg(2+) as a cofactor. The cofactor is Mn(2+).

It carries out the reaction L-seryl-[protein] + ATP = 3-O-(5'-adenylyl)-L-seryl-[protein] + diphosphate. The catalysed reaction is L-threonyl-[protein] + ATP = 3-O-(5'-adenylyl)-L-threonyl-[protein] + diphosphate. It catalyses the reaction L-tyrosyl-[protein] + ATP = O-(5'-adenylyl)-L-tyrosyl-[protein] + diphosphate. The enzyme catalyses L-histidyl-[protein] + UTP = N(tele)-(5'-uridylyl)-L-histidyl-[protein] + diphosphate. It carries out the reaction L-seryl-[protein] + UTP = O-(5'-uridylyl)-L-seryl-[protein] + diphosphate. The catalysed reaction is L-tyrosyl-[protein] + UTP = O-(5'-uridylyl)-L-tyrosyl-[protein] + diphosphate. Functionally, nucleotidyltransferase involved in the post-translational modification of proteins. It can catalyze the addition of adenosine monophosphate (AMP) or uridine monophosphate (UMP) to a protein, resulting in modifications known as AMPylation and UMPylation. This chain is Protein nucleotidyltransferase YdiU, found in Variovorax paradoxus (strain S110).